Consider the following 316-residue polypeptide: Dehydrogenase/reductase SDR family protein 7-like (316 aa).

Topologically, residues 1-18 (MFFYKIIYFIGFPYIVLR) are cytoplasmic. A helical; Signal-anchor for type II membrane protein transmembrane segment spans residues 19-39 (LIVSIILPIASLYFIYCNFIA). Over 40 to 316 (PKLREKPESS…HKFASSSVKK (277 aa)) the chain is Peroxisomal. 56 to 80 (IITGASSGIGAELAKKYARLGCKVT) provides a ligand contact to NAD(+). Ser194 contributes to the substrate binding site. The active-site Proton acceptor is the Tyr207.

It belongs to the short-chain dehydrogenases/reductases (SDR) family.

The protein resides in the peroxisome membrane. Putative oxidoreductase. The sequence is that of Dehydrogenase/reductase SDR family protein 7-like from Dictyostelium discoideum (Social amoeba).